We begin with the raw amino-acid sequence, 167 residues long: Thioredoxin M-type, chloroplastic (167 aa).

The transit peptide at 1 to 53 (MAMETCFRAWALHAPAGSKDRLLVGNLVLPSKRALAPLSVGRVATRRPRHVCQ) directs the protein to the chloroplast. In terms of domain architecture, Thioredoxin spans 54-165 (SKNAVDEVVV…LTTLIDKYIG (112 aa)). Cysteines 89 and 92 form a disulfide.

Belongs to the thioredoxin family. Plant M-type subfamily. Forms a complex with heterodimeric ferredoxin-thioredoxin reductase (FTR) and ferredoxin.

Its subcellular location is the plastid. It is found in the chloroplast. Functionally, participates in various redox reactions through the reversible oxidation of the active center dithiol to a disulfide. The M form is known to activate NADP-malate dehydrogenase. The sequence is that of Thioredoxin M-type, chloroplastic (TRM1) from Zea mays (Maize).